The primary structure comprises 428 residues: Putative oxidoreductase YteT (428 aa).

Residues 1 to 23 form the signal peptide; it reads MKNIVFCGLSSRAFSMFIKPLME.

It belongs to the Gfo/Idh/MocA family.

May play a role in the degradation of type I rhamnogalacturonan derived from plant cell walls. The protein is Putative oxidoreductase YteT (yteT) of Bacillus subtilis (strain 168).